The chain runs to 336 residues: Ankyrin repeat and SOCS box protein 1 (336 aa).

6 ANK repeats span residues 37-69, 78-107, 111-140, 144-173, 192-221, and 236-266; these read CDDT…RINE, LPCT…EVDL, KGQT…DPNG, HRST…DVDV, LVVC…NPDF, and SPGC…NLNL. Residues 287–336 enclose the SOCS box domain; the sequence is LQVFKEARSIPRTLLSLCRVAVRRALGKYRLHLVPSLPLPDPIKKFLLYE.

This sequence belongs to the ankyrin SOCS box (ASB) family. As to quaternary structure, interacts with CUL5 and RNF7. In terms of tissue distribution, highest expression in testis, spleen, bone marrow and salivary gland.

It participates in protein modification; protein ubiquitination. In terms of biological role, probable substrate-recognition component of a SCF-like ECS (Elongin-Cullin-SOCS-box protein) E3 ligase complex which mediates the ubiquitination and subsequent proteasomal degradation of target proteins. Mediates Notch-induced ubiquitination and degradation of TCF3/E2A and JAK2. May play a role in testis development. In Mus musculus (Mouse), this protein is Ankyrin repeat and SOCS box protein 1 (Asb1).